The primary structure comprises 304 residues: Heme A synthase (304 aa).

The Cytoplasmic segment spans residues 1-8 (MFNKRNLK). A helical transmembrane segment spans residues 9–29 (WLSVLATIIMAFVQLGGALVT). Residues 30 to 67 (KTGSEDGCGSSWPLCHGALLPQNLPIDTIIELSHRAVS) are Extracellular-facing. Cys37 and Cys44 are joined by a disulfide. Glu60 is an active-site residue. Residue His63 coordinates heme o. The chain crosses the membrane as a helical span at residues 68–88 (GLSLIVVLWLAITAWKHIGYI). Residues 89 to 93 (REVKP) are Cytoplasmic-facing. Residues 94–114 (LAIISIAFLLVQALIGAAAVI) form a helical membrane-spanning segment. Residues 115-123 (WQQNSYVLA) are Extracellular-facing. A helical transmembrane segment spans residues 124–144 (LHFGISLISFSSVFVLMLIIF). Residue His125 coordinates heme o. Topologically, residues 145-163 (EVDKKYEADELYIRKPLRR) are cytoplasmic. The helical transmembrane segment at 164–184 (LTWIMTGIVYLTIYTGALVRH) threads the bilayer. At 185-215 (AKASLAYGGWPLPFHDIIPHTEQDWVQFAHR) the chain is on the extracellular side. His214 serves as a coordination point for heme b. The chain crosses the membrane as a helical span at residues 216–236 (GMAFITFFWIMITFIHAVKNY). Over 237–244 (SENRTIRY) the chain is Cytoplasmic. The helical transmembrane segment at 245–265 (GYTTAFILIILQVITGALSVM) threads the bilayer. At 266-270 (TNVNL) the chain is on the extracellular side. Residues 271-291 (FIALLHALFITILFGMIAYFI) traverse the membrane as a helical segment. Residue His276 participates in heme b binding. The Cytoplasmic segment spans residues 292–304 (MLMLRTIRSEKIK).

It belongs to the COX15/CtaA family. Type 1 subfamily. As to quaternary structure, interacts with CtaB. Heme b is required as a cofactor.

The protein localises to the cell membrane. It catalyses the reaction Fe(II)-heme o + 2 A + H2O = Fe(II)-heme a + 2 AH2. It participates in porphyrin-containing compound metabolism; heme A biosynthesis; heme A from heme O: step 1/1. In terms of biological role, catalyzes the conversion of heme O to heme A by two successive hydroxylations of the methyl group at C8. The first hydroxylation forms heme I, the second hydroxylation results in an unstable dihydroxymethyl group, which spontaneously dehydrates, resulting in the formyl group of heme A. In Staphylococcus haemolyticus (strain JCSC1435), this protein is Heme A synthase.